We begin with the raw amino-acid sequence, 284 residues long: MSTSTQITKPYSTRALTHQSQTARRLLKLMSDKRTNLCASLDVTTSAELLSLADKLGPYICMVKTHVDIISDFTYDETVVKLVALAKKHGFMIFEDRKFADIGNTVKNQYSKGVYRIVEWADITNAHSVPGEGIINGLREAANEYVESEKAKGGECENLDRGLIMLAELSSKGSLATGSYTTKTVELAHNNSDFVFGFIAQNRMEEVQDSEGNYEDWLILTPGVGLDDKGDGLGQQYRTVDTVIKNGSDVIIVGRGLFGKGRDPVVEGKRYRDAGWKAYEERIN.

Residues aspartate 42, 64 to 66 (KTH), 96 to 105 (DRKFADIGNT), tyrosine 237, and arginine 255 contribute to the substrate site. The active-site Proton donor is the lysine 98.

This sequence belongs to the OMP decarboxylase family.

The enzyme catalyses orotidine 5'-phosphate + H(+) = UMP + CO2. The protein operates within pyrimidine metabolism; UMP biosynthesis via de novo pathway; UMP from orotate: step 2/2. The chain is Orotidine 5'-phosphate decarboxylase (URA3) from Magnusiomyces magnusii (Yeast).